The chain runs to 431 residues: Hydroxylamine reductase (431 aa).

[4Fe-4S] cluster contacts are provided by Cys5, Cys8, Cys17, and Cys23. Hybrid [4Fe-2O-2S] cluster contacts are provided by His131, Glu155, Cys199, Cys286, Cys314, Cys339, Glu373, and Lys375. Cysteine persulfide is present on Cys286.

The protein belongs to the HCP family. [4Fe-4S] cluster is required as a cofactor. The cofactor is hybrid [4Fe-2O-2S] cluster.

The protein localises to the cytoplasm. The enzyme catalyses A + NH4(+) + H2O = hydroxylamine + AH2 + H(+). Its function is as follows. Catalyzes the reduction of hydroxylamine to form NH(3) and H(2)O. This chain is Hydroxylamine reductase, found in Thermotoga petrophila (strain ATCC BAA-488 / DSM 13995 / JCM 10881 / RKU-1).